We begin with the raw amino-acid sequence, 67 residues long: MAVPKKRTSKSKTKIRKTTWKKEACESAIKAFSLAKSILSQRSKSFYYSKKNIILPSSFESQSKEEE.

The protein belongs to the bacterial ribosomal protein bL32 family.

It is found in the plastid. Its subcellular location is the chloroplast. This is Large ribosomal subunit protein bL32c from Chara vulgaris (Common stonewort).